The chain runs to 811 residues: Glycerol-3-phosphate acyltransferase (811 aa).

The short motif at 309-314 is the HXXXXD motif element; that stretch reads CHRSHM.

It belongs to the GPAT/DAPAT family.

It is found in the cell inner membrane. The enzyme catalyses sn-glycerol 3-phosphate + an acyl-CoA = a 1-acyl-sn-glycero-3-phosphate + CoA. It functions in the pathway phospholipid metabolism; CDP-diacylglycerol biosynthesis; CDP-diacylglycerol from sn-glycerol 3-phosphate: step 1/3. The protein is Glycerol-3-phosphate acyltransferase of Colwellia psychrerythraea (strain 34H / ATCC BAA-681) (Vibrio psychroerythus).